Here is a 378-residue protein sequence, read N- to C-terminus: Succinyl-diaminopimelate desuccinylase (378 aa).

Histidine 67 provides a ligand contact to Zn(2+). Residue aspartate 69 is part of the active site. A Zn(2+)-binding site is contributed by aspartate 100. Glutamate 134 functions as the Proton acceptor in the catalytic mechanism. 3 residues coordinate Zn(2+): glutamate 135, glutamate 163, and histidine 349.

The protein belongs to the peptidase M20A family. DapE subfamily. In terms of assembly, homodimer. Zn(2+) is required as a cofactor. Co(2+) serves as cofactor.

It carries out the reaction N-succinyl-(2S,6S)-2,6-diaminopimelate + H2O = (2S,6S)-2,6-diaminopimelate + succinate. The protein operates within amino-acid biosynthesis; L-lysine biosynthesis via DAP pathway; LL-2,6-diaminopimelate from (S)-tetrahydrodipicolinate (succinylase route): step 3/3. Its function is as follows. Catalyzes the hydrolysis of N-succinyl-L,L-diaminopimelic acid (SDAP), forming succinate and LL-2,6-diaminopimelate (DAP), an intermediate involved in the bacterial biosynthesis of lysine and meso-diaminopimelic acid, an essential component of bacterial cell walls. This chain is Succinyl-diaminopimelate desuccinylase, found in Nitrosomonas eutropha (strain DSM 101675 / C91 / Nm57).